We begin with the raw amino-acid sequence, 123 residues long: Large ribosomal subunit protein bL17 (123 aa).

It belongs to the bacterial ribosomal protein bL17 family. As to quaternary structure, part of the 50S ribosomal subunit. Contacts protein L32.

The polypeptide is Large ribosomal subunit protein bL17 (Borreliella burgdorferi (strain ATCC 35210 / DSM 4680 / CIP 102532 / B31) (Borrelia burgdorferi)).